The primary structure comprises 193 residues: Pyridoxal 5'-phosphate synthase subunit PdxT (193 aa).

L-glutamine is bound at residue 52-54 (GES). The Nucleophile role is filled by C84. L-glutamine-binding positions include R111 and 139–140 (IR). Catalysis depends on charge relay system residues H176 and E178.

This sequence belongs to the glutaminase PdxT/SNO family. In terms of assembly, in the presence of PdxS, forms a dodecamer of heterodimers. Only shows activity in the heterodimer.

The enzyme catalyses aldehydo-D-ribose 5-phosphate + D-glyceraldehyde 3-phosphate + L-glutamine = pyridoxal 5'-phosphate + L-glutamate + phosphate + 3 H2O + H(+). It catalyses the reaction L-glutamine + H2O = L-glutamate + NH4(+). It functions in the pathway cofactor biosynthesis; pyridoxal 5'-phosphate biosynthesis. In terms of biological role, catalyzes the hydrolysis of glutamine to glutamate and ammonia as part of the biosynthesis of pyridoxal 5'-phosphate. The resulting ammonia molecule is channeled to the active site of PdxS. In Pasteurella multocida (strain Pm70), this protein is Pyridoxal 5'-phosphate synthase subunit PdxT.